Consider the following 1076-residue polypeptide: Guanylyl cyclase C (1076 aa).

Residues 1–23 (MKSPLLGLVVWSLLLQLLQPGLA) form the signal peptide. At 24-433 (FWNSQISQNC…PHDIPGLGPH (410 aa)) the chain is on the extracellular side. N-linked (GlcNAc...) asparagine glycans are attached at residues asparagine 35, asparagine 82, asparagine 191, asparagine 198, asparagine 287, asparagine 306, asparagine 310, asparagine 348, and asparagine 405. A helical transmembrane segment spans residues 434-457 (ILLIAVCTLAGVVVLILLIALLVL). At 458–1076 (RKYKKDNELR…NTTDQDSTYF (619 aa)) the chain is on the cytoplasmic side. Residues 492–752 (LKIDDDKKRD…KIENTLAKIF (261 aa)) enclose the Protein kinase domain. Positions 827–957 (TVYFSDIVGF…DTVNTASRME (131 aa)) constitute a Guanylate cyclase domain.

Belongs to the adenylyl cyclase class-4/guanylyl cyclase family. In terms of assembly, homotrimer. Interacts via its C-terminal region with NHERF4. Interacts with the lectin chaperone VIP36. Glycosylation at Asn-62 is required for interaction with VIP36 while glycosylation at Asn-348 and Asn-405 modulates ligand-mediated GC-C activation.

Its subcellular location is the cell membrane. It localises to the endoplasmic reticulum membrane. The catalysed reaction is GTP = 3',5'-cyclic GMP + diphosphate. In terms of biological role, guanylyl cyclase that catalyzes synthesis of cyclic GMP (cGMP) from GTP. The sequence is that of Guanylyl cyclase C (GUCY2C) from Cavia porcellus (Guinea pig).